The following is a 262-amino-acid chain: Acyl-[acyl-carrier-protein]--UDP-N-acetylglucosamine O-acyltransferase (262 aa).

This sequence belongs to the transferase hexapeptide repeat family. LpxA subfamily. In terms of assembly, homotrimer.

It is found in the cytoplasm. The enzyme catalyses a (3R)-hydroxyacyl-[ACP] + UDP-N-acetyl-alpha-D-glucosamine = a UDP-3-O-[(3R)-3-hydroxyacyl]-N-acetyl-alpha-D-glucosamine + holo-[ACP]. Its pathway is glycolipid biosynthesis; lipid IV(A) biosynthesis; lipid IV(A) from (3R)-3-hydroxytetradecanoyl-[acyl-carrier-protein] and UDP-N-acetyl-alpha-D-glucosamine: step 1/6. Its function is as follows. Involved in the biosynthesis of lipid A, a phosphorylated glycolipid that anchors the lipopolysaccharide to the outer membrane of the cell. This chain is Acyl-[acyl-carrier-protein]--UDP-N-acetylglucosamine O-acyltransferase, found in Vibrio cholerae serotype O1 (strain ATCC 39541 / Classical Ogawa 395 / O395).